The following is a 266-amino-acid chain: Phosphonates import ATP-binding protein PhnC (266 aa).

An ABC transporter domain is found at 2-246 (IEIKNVSKTY…KFAEIYGRPI (245 aa)). Residue 35 to 42 (GLSGAGKS) participates in ATP binding.

Belongs to the ABC transporter superfamily. Phosphonates importer (TC 3.A.1.9.1) family. As to quaternary structure, the complex is composed of two ATP-binding proteins (PhnC), two transmembrane proteins (PhnE) and a solute-binding protein (PhnD).

Its subcellular location is the cell membrane. It carries out the reaction phosphonate(out) + ATP + H2O = phosphonate(in) + ADP + phosphate + H(+). Its function is as follows. Part of the ABC transporter complex PhnCDE involved in phosphonates import. Responsible for energy coupling to the transport system. The protein is Phosphonates import ATP-binding protein PhnC of Shouchella clausii (strain KSM-K16) (Alkalihalobacillus clausii).